The chain runs to 495 residues: Calcium-dependent protein kinase 11 (495 aa).

One can recognise a Protein kinase domain in the interval 26–284 (YLLGKKLGQG…AHEALCHPWI (259 aa)). ATP-binding positions include 32–40 (LGQGQFGTT) and lysine 55. Residue aspartate 150 is the Proton acceptor of the active site. The residue at position 190 (serine 190) is a Phosphoserine. The segment at 290–320 (APDKPLDPAVLSRLKQFSQMNKIKKMALRVI) is autoinhibitory domain. 4 consecutive EF-hand domains span residues 327 to 362 (EEIG…VGSE), 363 to 398 (LMES…MNKM), 399 to 434 (EREE…FGLC), and 438 to 468 (LDDM…GDGV). 20 residues coordinate Ca(2+): aspartate 340, aspartate 342, serine 344, threonine 346, glutamate 351, aspartate 376, aspartate 378, serine 380, threonine 382, glutamate 387, aspartate 412, aspartate 414, serine 416, tyrosine 418, glutamate 423, aspartate 446, aspartate 448, aspartate 450, lysine 452, and glutamate 457.

The protein belongs to the protein kinase superfamily. Ser/Thr protein kinase family. CDPK subfamily. As to quaternary structure, interacts with Di19.

It is found in the cytoplasm. It localises to the nucleus. The catalysed reaction is L-seryl-[protein] + ATP = O-phospho-L-seryl-[protein] + ADP + H(+). It catalyses the reaction L-threonyl-[protein] + ATP = O-phospho-L-threonyl-[protein] + ADP + H(+). With respect to regulation, activated by calcium. Autophosphorylation may play an important role in the regulation of the kinase activity. Functionally, may play a role in signal transduction pathways that involve calcium as a second messenger. Functions as a regulator of the calcium-mediated abscisic acid (ABA) signaling pathway. Phosphorylates ABA-responsive transcription factors ABF1 and ABF4 in vitro. The polypeptide is Calcium-dependent protein kinase 11 (CPK11) (Arabidopsis thaliana (Mouse-ear cress)).